A 117-amino-acid chain; its full sequence is MSLGIDMNVKESVLCIRLTGELDHHTAETLKQKVTQSLEKDDIRHIVLNLEDLSFMDSSGLGVILGRYKQIKQIGGEMVVCAISPAVKRLFDMSGLFKIIRFEQSEQQALLTLGVAS.

An STAS domain is found at 3-113 (LGIDMNVKES…QSEQQALLTL (111 aa)). A Phosphoserine modification is found at S58.

Belongs to the anti-sigma-factor antagonist family. Post-translationally, phosphorylated by SpoIIAB on a serine residue.

In terms of biological role, in the phosphorylated form it could act as an anti-anti-sigma factor that counteracts SpoIIAB and thus releases sigma f from inhibition. In Bacillus subtilis (strain 168), this protein is Anti-sigma F factor antagonist (spoIIAA).